Here is a 70-residue protein sequence, read N- to C-terminus: Large ribosomal subunit protein uL29 (70 aa).

Belongs to the universal ribosomal protein uL29 family.

The polypeptide is Large ribosomal subunit protein uL29 (Prochlorococcus marinus (strain NATL1A)).